The primary structure comprises 812 residues: ATP-dependent DNA helicase PIF3 (812 aa).

247-254 is an ATP binding site; the sequence is GSAGTGKT. A DNA-binding region spans residues 741 to 761; the sequence is HLVYVACSRVRSMDQLIVRNV.

It belongs to the helicase family. PIF1 subfamily. Monomer. Requires Mg(2+) as cofactor.

Its subcellular location is the cytoplasm. It carries out the reaction Couples ATP hydrolysis with the unwinding of duplex DNA at the replication fork by translocating in the 5'-3' direction. This creates two antiparallel DNA single strands (ssDNA). The leading ssDNA polymer is the template for DNA polymerase III holoenzyme which synthesizes a continuous strand.. It catalyses the reaction ATP + H2O = ADP + phosphate + H(+). Its function is as follows. DNA-dependent ATPase and 5'-3' DNA helicase required for the maintenance of genome stability. The sequence is that of ATP-dependent DNA helicase PIF3 from Trypanosoma brucei brucei (strain 927/4 GUTat10.1).